A 293-amino-acid chain; its full sequence is Probable 2-(5''-triphosphoribosyl)-3'-dephosphocoenzyme-A synthase (293 aa).

Belongs to the CitG/MdcB family.

It carries out the reaction 3'-dephospho-CoA + ATP = 2'-(5''-triphospho-alpha-D-ribosyl)-3'-dephospho-CoA + adenine. Its function is as follows. Involved in the formation of 2-(5''-phosphoribosyl)-3'-dephosphocoenzyme-A, the prosthetic group of the acyl-carrier protein of the malonate decarboxylase. This is Probable 2-(5''-triphosphoribosyl)-3'-dephosphocoenzyme-A synthase from Pseudomonas aeruginosa (strain UCBPP-PA14).